A 153-amino-acid chain; its full sequence is Mitochondrial fission 1 protein (153 aa).

Residues 1 to 127 (MFGKSTYPAL…SIHEKVTQEG (127 aa)) lie on the Cytoplasmic side of the membrane. The TPR repeat unit spans residues 76–109 (RECLYYLALGSYKIGDYSNATRYADTLLKNEPEN). The helical transmembrane segment at 128 to 148 (LIGIGIAGGALAVGVGILGAL) threads the bilayer. Topologically, residues 149-153 (LRKKR) are mitochondrial intermembrane.

It belongs to the FIS1 family.

The protein resides in the mitochondrion outer membrane. Functionally, has a role in mitochondrial fission. Has a role in outer membrane fission but not matrix separation. This chain is Mitochondrial fission 1 protein (FIS1), found in Debaryomyces hansenii (strain ATCC 36239 / CBS 767 / BCRC 21394 / JCM 1990 / NBRC 0083 / IGC 2968) (Yeast).